Here is a 285-residue protein sequence, read N- to C-terminus: Protease HtpX homolog (285 aa).

Transmembrane regions (helical) follow at residues 7–27 (TAML…MIGG) and 30–50 (GMTI…WFSD). H131 lines the Zn(2+) pocket. Residue E132 is part of the active site. H135 is a Zn(2+) binding site. The next 2 helical transmembrane spans lie at 146 to 166 (ITAT…FFGG) and 177 to 197 (IAGI…QMAI). E202 is a binding site for Zn(2+).

It belongs to the peptidase M48B family. The cofactor is Zn(2+).

The protein localises to the cell inner membrane. This chain is Protease HtpX homolog, found in Burkholderia cenocepacia (strain HI2424).